Reading from the N-terminus, the 960-residue chain is RNA polymerase II subunit A C-terminal domain phosphatase (960 aa).

Met-1 is modified (N-acetylmethionine). One can recognise an FCP1 homology domain in the interval His-178–Arg-341. The segment at Ala-331 to Leu-580 is disordered. Residues Pro-439 to Ala-448 show a composition bias toward polar residues. The segment covering Leu-453–Ser-463 has biased composition (acidic residues). At Ser-530 the chain carries Phosphoserine. Residues Glu-547–Val-556 show a composition bias toward polar residues. Over residues Val-566–Asp-578 the composition is skewed to acidic residues. One can recognise a BRCT domain in the interval Leu-619–Leu-718. Ser-664 and Ser-730 each carry phosphoserine. N6-acetyllysine is present on Lys-770. Disordered regions lie at residues Lys-770–Ala-834 and Asp-854–Met-948. 3 positions are modified to phosphoserine: Ser-830, Ser-860, and Ser-863. The segment covering Asp-854 to Asp-864 has biased composition (acidic residues). Basic and acidic residues predominate over residues Ile-865 to Pro-881. Acidic residues predominate over residues Ser-934–Glu-947.

Homodimer. Interacts with GTF2F1. Interacts with WDR77, SNRPB and SNRNP70. Phosphorylated. In the presence of TFIIF, the phosphorylated form has an increased CTD phosphatase activity. The phosphorylation is required for the physical interaction with GTF2F1.

It localises to the nucleus. Its subcellular location is the cytoplasm. The protein localises to the cytoskeleton. The protein resides in the microtubule organizing center. It is found in the centrosome. It localises to the spindle. Its subcellular location is the spindle pole. The protein localises to the midbody. It catalyses the reaction O-phospho-L-seryl-[protein] + H2O = L-seryl-[protein] + phosphate. The enzyme catalyses O-phospho-L-threonyl-[protein] + H2O = L-threonyl-[protein] + phosphate. Processively dephosphorylates 'Ser-2' and 'Ser-5' of the heptad repeats YSPTSPS in the C-terminal domain of the largest RNA polymerase II subunit. This promotes the activity of RNA polymerase II. Plays a role in the exit from mitosis by dephosphorylating crucial mitotic substrates (USP44, CDC20 and WEE1) that are required for M-phase-promoting factor (MPF)/CDK1 inactivation. The chain is RNA polymerase II subunit A C-terminal domain phosphatase (Ctdp1) from Mus musculus (Mouse).